The chain runs to 81 residues: Exodeoxyribonuclease 7 small subunit (81 aa).

This sequence belongs to the XseB family. Heterooligomer composed of large and small subunits.

It localises to the cytoplasm. The catalysed reaction is Exonucleolytic cleavage in either 5'- to 3'- or 3'- to 5'-direction to yield nucleoside 5'-phosphates.. In terms of biological role, bidirectionally degrades single-stranded DNA into large acid-insoluble oligonucleotides, which are then degraded further into small acid-soluble oligonucleotides. This is Exodeoxyribonuclease 7 small subunit from Pseudomonas syringae pv. syringae (strain B728a).